Here is a 253-residue protein sequence, read N- to C-terminus: UPF0246 protein Swit_4565 (253 aa).

Belongs to the UPF0246 family.

The chain is UPF0246 protein Swit_4565 from Rhizorhabdus wittichii (strain DSM 6014 / CCUG 31198 / JCM 15750 / NBRC 105917 / EY 4224 / RW1) (Sphingomonas wittichii).